Consider the following 205-residue polypeptide: Pyridoxal 5'-phosphate synthase subunit PdxT (205 aa).

52–54 (GES) contributes to the L-glutamine binding site. The active-site Nucleophile is the Cys84. L-glutamine-binding positions include Arg116 and 145–146 (IR). Catalysis depends on charge relay system residues His185 and Glu187.

It belongs to the glutaminase PdxT/SNO family. As to quaternary structure, in the presence of PdxS, forms a dodecamer of heterodimers. Only shows activity in the heterodimer.

It carries out the reaction aldehydo-D-ribose 5-phosphate + D-glyceraldehyde 3-phosphate + L-glutamine = pyridoxal 5'-phosphate + L-glutamate + phosphate + 3 H2O + H(+). The enzyme catalyses L-glutamine + H2O = L-glutamate + NH4(+). It functions in the pathway cofactor biosynthesis; pyridoxal 5'-phosphate biosynthesis. Functionally, catalyzes the hydrolysis of glutamine to glutamate and ammonia as part of the biosynthesis of pyridoxal 5'-phosphate. The resulting ammonia molecule is channeled to the active site of PdxS. The protein is Pyridoxal 5'-phosphate synthase subunit PdxT of Staphylothermus marinus (strain ATCC 43588 / DSM 3639 / JCM 9404 / F1).